We begin with the raw amino-acid sequence, 208 residues long: Probable thymidylate kinase (208 aa).

Residue 9–16 (GIDGAGKS) participates in ATP binding.

It belongs to the thymidylate kinase family.

The enzyme catalyses dTMP + ATP = dTDP + ADP. This Thermococcus gammatolerans (strain DSM 15229 / JCM 11827 / EJ3) protein is Probable thymidylate kinase.